The primary structure comprises 165 residues: uncharacterized protein (165 aa).

Residues 15-35 (MSPAIILIGVLILIVLFVIKF) form a helical membrane-spanning segment. A coiled-coil region spans residues 67 to 119 (ISQLNTLRATLAAKKKELKTLRTARKKECTEQLAKTQAEVDRIQAKIDNFSSR). The disordered stretch occupies residues 123-156 (VPLPGGEVGPPYNPPPPRTNTRPNPRPNPRPAQL). A compositionally biased stretch (pro residues) spans 133–154 (PYNPPPPRTNTRPNPRPNPRPA).

The protein localises to the membrane. This is an uncharacterized protein from Acheta domesticus (House cricket).